Consider the following 141-residue polypeptide: Hemoglobin subunit alpha-A (141 aa).

The region spanning 1 to 141 (VLTEEDKSRV…VAKTLVSRYR (141 aa)) is the Globin domain. H58 provides a ligand contact to O2. Position 87 (H87) interacts with heme b.

This sequence belongs to the globin family. Heterotetramer of two alpha chains and two beta chains. Red blood cells.

In terms of biological role, involved in oxygen transport from the lung to the various peripheral tissues. This chain is Hemoglobin subunit alpha-A, found in Drymarchon melanurus erebennus (Texas indigo snake).